A 117-amino-acid chain; its full sequence is Large ribosomal subunit protein uL18 (117 aa).

This sequence belongs to the universal ribosomal protein uL18 family. In terms of assembly, part of the 50S ribosomal subunit; part of the 5S rRNA/L5/L18/L25 subcomplex. Contacts the 5S and 23S rRNAs.

In terms of biological role, this is one of the proteins that bind and probably mediate the attachment of the 5S RNA into the large ribosomal subunit, where it forms part of the central protuberance. This Vibrio atlanticus (strain LGP32) (Vibrio splendidus (strain Mel32)) protein is Large ribosomal subunit protein uL18.